Consider the following 430-residue polypeptide: Serine hydroxymethyltransferase (430 aa).

120–122 (GHI) contributes to the (6S)-5,6,7,8-tetrahydrofolate binding site. N6-(pyridoxal phosphate)lysine is present on lysine 226.

It belongs to the SHMT family. Homodimer. The cofactor is pyridoxal 5'-phosphate.

The protein localises to the cytoplasm. It participates in amino-acid biosynthesis; glycine biosynthesis; glycine from L-serine: step 1/1. Its function is as follows. Catalyzes the reversible interconversion of serine and glycine with a modified folate serving as the one-carbon carrier. Also exhibits a pteridine-independent aldolase activity toward beta-hydroxyamino acids, producing glycine and aldehydes, via a retro-aldol mechanism. This is Serine hydroxymethyltransferase from Pyrobaculum neutrophilum (strain DSM 2338 / JCM 9278 / NBRC 100436 / V24Sta) (Thermoproteus neutrophilus).